The chain runs to 361 residues: Peptide chain release factor 1 (361 aa).

Glutamine 235 bears the N5-methylglutamine mark. The tract at residues arginine 283 to arginine 306 is disordered.

It belongs to the prokaryotic/mitochondrial release factor family. In terms of processing, methylated by PrmC. Methylation increases the termination efficiency of RF1.

The protein localises to the cytoplasm. In terms of biological role, peptide chain release factor 1 directs the termination of translation in response to the peptide chain termination codons UAG and UAA. In Xylella fastidiosa (strain M23), this protein is Peptide chain release factor 1.